Here is a 485-residue protein sequence, read N- to C-terminus: Glutamyl-tRNA(Gln) amidotransferase subunit A (485 aa).

Active-site charge relay system residues include lysine 78 and serine 153. Catalysis depends on serine 177, which acts as the Acyl-ester intermediate.

This sequence belongs to the amidase family. GatA subfamily. As to quaternary structure, heterotrimer of A, B and C subunits.

It catalyses the reaction L-glutamyl-tRNA(Gln) + L-glutamine + ATP + H2O = L-glutaminyl-tRNA(Gln) + L-glutamate + ADP + phosphate + H(+). Functionally, allows the formation of correctly charged Gln-tRNA(Gln) through the transamidation of misacylated Glu-tRNA(Gln) in organisms which lack glutaminyl-tRNA synthetase. The reaction takes place in the presence of glutamine and ATP through an activated gamma-phospho-Glu-tRNA(Gln). This Bacillus cereus (strain 03BB102) protein is Glutamyl-tRNA(Gln) amidotransferase subunit A.